Consider the following 185-residue polypeptide: uncharacterized protein (185 aa).

This sequence belongs to the PIGL family.

This is an uncharacterized protein from Escherichia coli (strain K12).